The sequence spans 123 residues: MPTIKQLIRNTRQPIRNVTKSPALRGCPQRRGTCTRVYTITPKKPNSALRKVARVRLTSGFEITAYIPGIGHNLQEHSVVLVRGGRVKDLPGVRYHIVRGTLDAVGVKDRQQGRSKYGVKKPK.

This sequence belongs to the universal ribosomal protein uS12 family. In terms of assembly, part of the 30S ribosomal subunit.

Its subcellular location is the plastid. The protein localises to the chloroplast. With S4 and S5 plays an important role in translational accuracy. Located at the interface of the 30S and 50S subunits. The polypeptide is Small ribosomal subunit protein uS12cz/uS12cy (rps12-A) (Cucumis sativus (Cucumber)).